Consider the following 75-residue polypeptide: Guanine nucleotide-binding protein G(I)/G(S)/G(O) subunit gamma-4 (75 aa).

The residue at position 72 (C72) is a Cysteine methyl ester. The S-geranylgeranyl cysteine moiety is linked to residue C72. Positions 73-75 (TIL) are cleaved as a propeptide — removed in mature form.

It belongs to the G protein gamma family. In terms of assembly, g proteins are composed of 3 units, alpha, beta and gamma. Interacts with beta-1 and beta-2, but not with beta-3. Interacts with KCNK1. Interacts (via C-terminus) with KCNK2/TREK-1 (via N-terminus); this interaction confers ion selectivity to Cl(-) and L-glutamate. Brain.

It localises to the cell membrane. In terms of biological role, guanine nucleotide-binding proteins (G proteins) are involved as a modulator or transducer in various transmembrane signaling systems. The beta and gamma chains are required for the GTPase activity, for replacement of GDP by GTP, and for G protein-effector interaction. The chain is Guanine nucleotide-binding protein G(I)/G(S)/G(O) subunit gamma-4 (Gng4) from Mus musculus (Mouse).